We begin with the raw amino-acid sequence, 1470 residues long: Guanine nucleotide exchange factor subunit R06F6.8 (1470 aa).

WD repeat units lie at residues 20 to 58, 68 to 107, and 472 to 512; these read STAA…LLCS, ETRG…DEQC, and AYCS…VVGV. Disordered regions lie at residues 673–710, 975–1001, 1017–1045, and 1238–1259; these read QSQN…PMNQ, FFRT…ADSS, RLNK…SKDK, and RSPS…SPSS. Residues 689–707 show a composition bias toward low complexity; it reads SNVSIQSVSTSTTSEPSSP. Positions 983–1001 are enriched in polar residues; it reads AKTSLSRRPTVSSPSADSS. Basic and acidic residues predominate over residues 1028–1045; the sequence is EQKDAPRKDSIGGSSKDK. The chain crosses the membrane as a helical span at residues 1294–1314; sequence LLLSLFSQTATIDWIFLFCLL. Basic and acidic residues predominate over residues 1385–1403; that stretch reads SPDNENRKASQKTSADDPK. The interval 1385–1447 is disordered; it reads SPDNENRKAS…SADRAHKSVK (63 aa). Residues 1411 to 1424 show a composition bias toward polar residues; the sequence is SGSSKLNNSFSNPK. A compositionally biased stretch (basic and acidic residues) spans 1431–1447; that stretch reads GRRERSRSADRAHKSVK.

The protein belongs to the RIC1 family. As to quaternary structure, component of a guanine nucleotide exchange factor (GEF) complex.

It localises to the membrane. In terms of biological role, probable component of a guanine nucleotide exchange factor (GEF) that may be required for efficient fusion of endosome-derived vesicles with the Golgi. In Caenorhabditis elegans, this protein is Guanine nucleotide exchange factor subunit R06F6.8.